A 479-amino-acid polypeptide reads, in one-letter code: D-alanyl-D-alanine carboxypeptidase DacB (479 aa).

A signal peptide spans 1 to 26; that stretch reads MKKLSSISTALGSFLLSVSFSLPTFA. Ser69 acts as the Acyl-ester intermediate in catalysis. The active-site Proton acceptor is Lys72. Residue Ser310 is part of the active site. A substrate-binding site is contributed by Lys420.

The protein belongs to the peptidase S13 family.

The protein resides in the periplasm. It catalyses the reaction Preferential cleavage: (Ac)2-L-Lys-D-Ala-|-D-Ala. Also transpeptidation of peptidyl-alanyl moieties that are N-acyl substituents of D-alanine.. It functions in the pathway cell wall biogenesis; peptidoglycan biosynthesis. Its function is as follows. Not involved in transpeptidation but exclusively catalyzes a DD-carboxypeptidase and DD-endopeptidase reaction. The protein is D-alanyl-D-alanine carboxypeptidase DacB (dacB) of Haemophilus influenzae (strain ATCC 51907 / DSM 11121 / KW20 / Rd).